The following is a 921-amino-acid chain: Isoleucine--tRNA ligase (921 aa).

The short motif at 59–69 (PYANGHLHIGH) is the 'HIGH' region element. Glutamate 569 contributes to the L-isoleucyl-5'-AMP binding site. The 'KMSKS' region signature appears at 610 to 614 (KMSKS). Lysine 613 lines the ATP pocket. Residues cysteine 894, cysteine 897, cysteine 909, and cysteine 912 each coordinate Zn(2+).

Belongs to the class-I aminoacyl-tRNA synthetase family. IleS type 1 subfamily. As to quaternary structure, monomer. Requires Zn(2+) as cofactor.

Its subcellular location is the cytoplasm. It carries out the reaction tRNA(Ile) + L-isoleucine + ATP = L-isoleucyl-tRNA(Ile) + AMP + diphosphate. Functionally, catalyzes the attachment of isoleucine to tRNA(Ile). As IleRS can inadvertently accommodate and process structurally similar amino acids such as valine, to avoid such errors it has two additional distinct tRNA(Ile)-dependent editing activities. One activity is designated as 'pretransfer' editing and involves the hydrolysis of activated Val-AMP. The other activity is designated 'posttransfer' editing and involves deacylation of mischarged Val-tRNA(Ile). The polypeptide is Isoleucine--tRNA ligase (Campylobacter lari (strain RM2100 / D67 / ATCC BAA-1060)).